Reading from the N-terminus, the 339-residue chain is Ureidoglycine carbamoyltransferase (339 aa).

It belongs to the aspartate/ornithine carbamoyltransferase superfamily. In terms of assembly, homodimer.

The enzyme catalyses (S)-2-ureidoglycine + carbamoyl phosphate = allantoate + phosphate + H(+). Its pathway is purine metabolism. In terms of biological role, catalyzes the phosphorolysis of allantoate to ureidoglycine and carbamoyl phosphate. Is likely involved in a purine degradation pathway. This Rubrobacter xylanophilus (strain DSM 9941 / JCM 11954 / NBRC 16129 / PRD-1) protein is Ureidoglycine carbamoyltransferase.